A 660-amino-acid chain; its full sequence is DNA polymerase alpha-associated DNA helicase A (660 aa).

232–239 serves as a coordination point for ATP; it reads GPPGTGKT.

It belongs to the DNA2/NAM7 helicase family. As to quaternary structure, associates with the hexameric DNA polymerase alpha.

It localises to the cytoplasm. Its subcellular location is the nucleus. The catalysed reaction is ATP + H2O = ADP + phosphate + H(+). Functionally, DNA polymerase alpha-associated DNA helicase which may be involved in DNA replication. This chain is DNA polymerase alpha-associated DNA helicase A (hcs1), found in Schizosaccharomyces pombe (strain 972 / ATCC 24843) (Fission yeast).